The sequence spans 424 residues: Endo-beta-1,4-galactanase (424 aa).

The signal sequence occupies residues 1-26 (MKNVLAVFVVLIFVLGAFGTSGPAEA). 142–145 (DPAK) provides a ligand contact to substrate. Catalysis depends on glutamate 190, which acts as the Proton donor. Substrate-binding positions include 229-230 (TN) and histidine 263. Glutamate 288 serves as the catalytic Nucleophile. Threonine 292 serves as a coordination point for substrate. Positions 297, 299, 301, and 303 each coordinate Ca(2+). Substrate contacts are provided by lysine 307 and aspartate 384. Serine 392 and aspartate 395 together coordinate Ca(2+).

It belongs to the glycosyl hydrolase 53 family. It depends on Ca(2+) as a cofactor.

It catalyses the reaction The enzyme specifically hydrolyzes (1-&gt;4)-beta-D-galactosidic linkages in type I arabinogalactans.. Involved in galactan degradation. Degrades arabinose-free galactan to galactooligosaccharides, producing galactotetraose as the main product along with galactotriose, galactobiose, and galactose. May hydrolyze the beta-1,4-galactan linkages of the galactan portion of arabinogalactan type I, a pectic plant polysaccharide from which most of the arabinose has been removed. This Bacillus licheniformis (strain ATCC 14580 / DSM 13 / JCM 2505 / CCUG 7422 / NBRC 12200 / NCIMB 9375 / NCTC 10341 / NRRL NRS-1264 / Gibson 46) protein is Endo-beta-1,4-galactanase (ganB).